Reading from the N-terminus, the 90-residue chain is Mitochondrial import inner membrane translocase subunit Tim9 (90 aa).

The short motif at 24 to 48 (CFNSCVNEFGSRTVSGKEESCANNC) is the Twin CX3C motif element. 2 disulfides stabilise this stretch: cysteine 24/cysteine 48 and cysteine 28/cysteine 44.

This sequence belongs to the small Tim family. In terms of assembly, heterohexamer; composed of 3 copies of tim-9/tin-9.1 and 3 copies of tim-10/tin-10, named soluble 70 kDa complex. The complex associates with the tim-22 component of the TIM22 complex. Interacts with multi-pass transmembrane proteins in transit.

The protein localises to the mitochondrion inner membrane. Mitochondrial intermembrane chaperone that participates in the import and insertion of multi-pass transmembrane proteins into the mitochondrial inner membrane. May also be required for the transfer of beta-barrel precursors from the TOM complex to the sorting and assembly machinery (SAM complex) of the outer membrane. Acts as a chaperone-like protein that protects the hydrophobic precursors from aggregation and guide them through the mitochondrial intermembrane space. This Caenorhabditis elegans protein is Mitochondrial import inner membrane translocase subunit Tim9 (tin-9.1).